The chain runs to 206 residues: Small ribosomal subunit protein uS4 (206 aa).

Positions 96–156 (SRLDNVVYRM…EKSKNQLRIQ (61 aa)) constitute an S4 RNA-binding domain.

The protein belongs to the universal ribosomal protein uS4 family. Part of the 30S ribosomal subunit. Contacts protein S5. The interaction surface between S4 and S5 is involved in control of translational fidelity.

Its function is as follows. One of the primary rRNA binding proteins, it binds directly to 16S rRNA where it nucleates assembly of the body of the 30S subunit. In terms of biological role, with S5 and S12 plays an important role in translational accuracy. This is Small ribosomal subunit protein uS4 from Teredinibacter turnerae (strain ATCC 39867 / T7901).